The chain runs to 468 residues: 3-isopropylmalate dehydratase large subunit (468 aa).

[4Fe-4S] cluster-binding residues include Cys-347, Cys-408, and Cys-411.

This sequence belongs to the aconitase/IPM isomerase family. LeuC type 1 subfamily. As to quaternary structure, heterodimer of LeuC and LeuD. Requires [4Fe-4S] cluster as cofactor.

It carries out the reaction (2R,3S)-3-isopropylmalate = (2S)-2-isopropylmalate. Its pathway is amino-acid biosynthesis; L-leucine biosynthesis; L-leucine from 3-methyl-2-oxobutanoate: step 2/4. In terms of biological role, catalyzes the isomerization between 2-isopropylmalate and 3-isopropylmalate, via the formation of 2-isopropylmaleate. The protein is 3-isopropylmalate dehydratase large subunit of Methylobacillus flagellatus (strain ATCC 51484 / DSM 6875 / VKM B-1610 / KT).